A 614-amino-acid polypeptide reads, in one-letter code: DNA ligase (614 aa).

NAD(+) is bound by residues 29 to 33 and 73 to 74; these read DQDYD and SI. Lysine 111 serves as the catalytic N6-AMP-lysine intermediate. Arginine 127, glutamate 158, and lysine 270 together coordinate NAD(+). Residues cysteine 358, cysteine 361, cysteine 374, and cysteine 380 each coordinate Zn(2+). The region spanning 538–614 is the BRCT domain; sequence TLTHELFDKK…MTETDYLSKI (77 aa).

It belongs to the NAD-dependent DNA ligase family. LigA subfamily. Mg(2+) serves as cofactor. It depends on Mn(2+) as a cofactor.

The enzyme catalyses NAD(+) + (deoxyribonucleotide)n-3'-hydroxyl + 5'-phospho-(deoxyribonucleotide)m = (deoxyribonucleotide)n+m + AMP + beta-nicotinamide D-nucleotide.. In terms of biological role, DNA ligase that catalyzes the formation of phosphodiester linkages between 5'-phosphoryl and 3'-hydroxyl groups in double-stranded DNA using NAD as a coenzyme and as the energy source for the reaction. It is essential for DNA replication and repair of damaged DNA. The protein is DNA ligase of Ruthia magnifica subsp. Calyptogena magnifica.